Consider the following 312-residue polypeptide: Malate dehydrogenase 1 (312 aa).

NAD(+) contacts are provided by residues 11–16 and D35; that span reads GAGQIG. 2 residues coordinate substrate: R86 and R92. Residues N99 and 122-124 each bind NAD(+); that span reads ITN. Positions 124 and 155 each coordinate substrate. The Proton acceptor role is filled by H179.

This sequence belongs to the LDH/MDH superfamily. MDH type 3 family.

It catalyses the reaction (S)-malate + NAD(+) = oxaloacetate + NADH + H(+). Functionally, catalyzes the reversible oxidation of malate to oxaloacetate. This chain is Malate dehydrogenase 1, found in Anaeromyxobacter dehalogenans (strain 2CP-C).